A 547-amino-acid chain; its full sequence is Serine beta-lactamase-like protein LACTB, mitochondrial (547 aa).

The N-terminal 115 residues, 1–115 (MYRLMSAVTA…RAIESSRDLL (115 aa)), are a transit peptide targeting the mitochondrion. The span at 62-83 (GAAPAQSPAAPDPEASPLAEPP) shows a compositional bias: low complexity. Residues 62-96 (GAAPAQSPAAPDPEASPLAEPPQEQSLAPWSPQTP) are disordered. The active-site Acyl-ester intermediate is the Ser164. N6-succinyllysine is present on residues Lys283 and Lys284. An N6-acetyllysine mark is found at Lys297 and Lys342.

It belongs to the peptidase S12 family. As to expression, expressed predominantly in skeletal muscle.

The protein resides in the mitochondrion. Functionally, mitochondrial serine protease that acts as a regulator of mitochondrial lipid metabolism. Acts by decreasing protein levels of PISD, a mitochondrial enzyme that converts phosphatidylserine (PtdSer) to phosphatidylethanolamine (PtdEtn), thereby affecting mitochondrial lipid metabolism. It is unclear whether it acts directly by mediating proteolysis of PISD or by mediating proteolysis of another lipid metabolism protein. Acts as a tumor suppressor that has the ability to inhibit proliferation of multiple types of breast cancer cells: probably by promoting decreased levels of PISD, thereby affecting mitochondrial lipid metabolism. In Homo sapiens (Human), this protein is Serine beta-lactamase-like protein LACTB, mitochondrial.